The sequence spans 476 residues: Protein transport protein Sec61 subunit alpha isoform B (476 aa).

The Cytoplasmic segment spans residues 2 to 33; it reads GIKFLEVIKPFCAVLPEIQKPERKIQFREKVL. The chain crosses the membrane as a helical span at residues 34 to 53; that stretch reads WTAITLFIFLVCCQIPLFGI. Over 54 to 76 the chain is Lumenal; it reads MSSDSADPFYWMRVILASNRGTL. A helical membrane pass occupies residues 77-96; sequence MELGISPIVTSGLIMQLLAG. At 97-117 the chain is on the cytoplasmic side; that stretch reads AKIIEVGDTPKDRALFNGAQK. The chain crosses the membrane as a helical span at residues 118–138; it reads LFGMIITIGQAIVYVMTGMYG. Over 139–144 the chain is Lumenal; it reads DPSDMG. The helical transmembrane segment at 145–165 threads the bilayer; it reads AGICLLIIIQLFVAGLIVLLL. The Cytoplasmic segment spans residues 166-172; the sequence is DELLQKG. Residues 173-193 form a helical membrane-spanning segment; it reads YGLGSGISLFIATNICETIVW. At 194–240 the chain is on the lumenal side; it reads KAFSPTTVNTGRGTEFEGAIIALFHLLATRTDKVRALREAFYRQNLP. The helical transmembrane segment at 241 to 261 threads the bilayer; the sequence is NLMNLLATVFVFGVVIYFQGF. Residues 262–288 are Cytoplasmic-facing; sequence RVDLPIKSARYRGQYNTYPIKLFYTSN. The helical transmembrane segment at 289–309 threads the bilayer; it reads IPIILQSALVSNLYVISQMLS. The Lumenal segment spans residues 310-354; sequence TRFSGNFLVNLLGTWSDTSSGGPARAYPVGGLCYYFSPPESFGSV. Residues 355 to 375 traverse the membrane as a helical segment; sequence LDDPIHAAIYICFMLGSCAFF. Residues 376–420 are Cytoplasmic-facing; sequence SKTWIEVSGSSAKDVAKQLKEQQMVMRGHRETSMVHELNRYIPTA. The helical transmembrane segment at 421–441 threads the bilayer; it reads AAFGGLCIGGLSVMADFLGAI. The Lumenal portion of the chain corresponds to 442–445; the sequence is GSGT. A helical transmembrane segment spans residues 446-462; the sequence is GILLAVTIIYQYFEIFV. Residues 463-476 lie on the Cytoplasmic side of the membrane; it reads KEQSEMGSMGALLF.

Belongs to the SecY/SEC61-alpha family. As to quaternary structure, the SEC61 channel-forming translocon complex consists of channel-forming core components SEC61A1, SEC61B and SEC61G and different auxiliary components such as SEC62 and SEC63.

The protein resides in the endoplasmic reticulum membrane. Functionally, component of SEC61 channel-forming translocon complex that mediates transport of signal peptide-containing precursor polypeptides across the endoplasmic reticulum (ER). Forms a ribosome receptor and a gated pore in the ER membrane, both functions required for cotranslational translocation of nascent polypeptides. In Oncorhynchus mykiss (Rainbow trout), this protein is Protein transport protein Sec61 subunit alpha isoform B (sec61ab).